A 375-amino-acid chain; its full sequence is Queuine tRNA-ribosyltransferase (375 aa).

Residue Asp89 is the Proton acceptor of the active site. Substrate contacts are provided by residues 89–93 (DSGGF), Asp143, Gln185, and Gly212. The segment at 243–249 (GVGKPED) is RNA binding. Asp262 serves as the catalytic Nucleophile. The interval 267-271 (TRNAR) is RNA binding; important for wobble base 34 recognition. Zn(2+)-binding residues include Cys300, Cys302, Cys305, and His331.

This sequence belongs to the queuine tRNA-ribosyltransferase family. As to quaternary structure, homodimer. Within each dimer, one monomer is responsible for RNA recognition and catalysis, while the other monomer binds to the replacement base PreQ1. Zn(2+) serves as cofactor.

It catalyses the reaction 7-aminomethyl-7-carbaguanine + guanosine(34) in tRNA = 7-aminomethyl-7-carbaguanosine(34) in tRNA + guanine. It participates in tRNA modification; tRNA-queuosine biosynthesis. Catalyzes the base-exchange of a guanine (G) residue with the queuine precursor 7-aminomethyl-7-deazaguanine (PreQ1) at position 34 (anticodon wobble position) in tRNAs with GU(N) anticodons (tRNA-Asp, -Asn, -His and -Tyr). Catalysis occurs through a double-displacement mechanism. The nucleophile active site attacks the C1' of nucleotide 34 to detach the guanine base from the RNA, forming a covalent enzyme-RNA intermediate. The proton acceptor active site deprotonates the incoming PreQ1, allowing a nucleophilic attack on the C1' of the ribose to form the product. After dissociation, two additional enzymatic reactions on the tRNA convert PreQ1 to queuine (Q), resulting in the hypermodified nucleoside queuosine (7-(((4,5-cis-dihydroxy-2-cyclopenten-1-yl)amino)methyl)-7-deazaguanosine). This Pseudoalteromonas translucida (strain TAC 125) protein is Queuine tRNA-ribosyltransferase.